A 519-amino-acid polypeptide reads, in one-letter code: Chaperone SurA (519 aa).

Positions Met-1–Ala-31 are cleaved as a signal peptide. 2 stretches are compositionally biased toward low complexity: residues Ala-31–Ala-45 and Pro-197–Ala-207. 2 disordered regions span residues Ala-31 to Ser-50 and Asn-196 to Ser-221. In terms of domain architecture, PpiC 1 spans Pro-223–Asp-324. Residues Gly-328–Pro-361 are disordered. The 100-residue stretch at Val-364–Glu-463 folds into the PpiC 2 domain.

The protein localises to the periplasm. The enzyme catalyses [protein]-peptidylproline (omega=180) = [protein]-peptidylproline (omega=0). Its function is as follows. Chaperone involved in the correct folding and assembly of outer membrane proteins. Recognizes specific patterns of aromatic residues and the orientation of their side chains, which are found more frequently in integral outer membrane proteins. May act in both early periplasmic and late outer membrane-associated steps of protein maturation. The protein is Chaperone SurA of Bordetella pertussis (strain Tohama I / ATCC BAA-589 / NCTC 13251).